The following is a 207-amino-acid chain: MPKVAVYNKEGATVGEITLSDAVFGAEVNPGLLHEVVQMYLANKRQGTADTKTRAEVSGGGRKPWRQKGTGRARHGSIRSPLWRKGGIVFGPHPREYGWSMPKKARRAALRQALSAKVKSGELIVVDKFELEAPKTREVATLLKNLKVDGSAFIVTAQEDVNIYKSARNIPGVRVNAARNLNAYDVLAASKLVFTQDAVAKVEEVLG.

The segment at Gly-47–Ser-77 is disordered. The segment covering Lys-63–Ser-77 has biased composition (basic residues).

Belongs to the universal ribosomal protein uL4 family. As to quaternary structure, part of the 50S ribosomal subunit.

Its function is as follows. One of the primary rRNA binding proteins, this protein initially binds near the 5'-end of the 23S rRNA. It is important during the early stages of 50S assembly. It makes multiple contacts with different domains of the 23S rRNA in the assembled 50S subunit and ribosome. Functionally, forms part of the polypeptide exit tunnel. This Symbiobacterium thermophilum (strain DSM 24528 / JCM 14929 / IAM 14863 / T) protein is Large ribosomal subunit protein uL4.